The sequence spans 337 residues: Tryptophan--tRNA ligase (337 aa).

ATP is bound by residues 11–13 (QPT) and 19–20 (GN). The short motif at 12 to 20 (PTGALHLGN) is the 'HIGH' region element. Residue Asp-135 participates in L-tryptophan binding. Residues 147–149 (GED), Val-191, and 200–204 (KMSKS) each bind ATP. The 'KMSKS' region motif lies at 200-204 (KMSKS).

The protein belongs to the class-I aminoacyl-tRNA synthetase family. As to quaternary structure, homodimer.

It is found in the cytoplasm. The catalysed reaction is tRNA(Trp) + L-tryptophan + ATP = L-tryptophyl-tRNA(Trp) + AMP + diphosphate + H(+). Catalyzes the attachment of tryptophan to tRNA(Trp). This chain is Tryptophan--tRNA ligase, found in Parasynechococcus marenigrum (strain WH8102).